We begin with the raw amino-acid sequence, 268 residues long: Ribosomal RNA small subunit methyltransferase A (268 aa).

Positions 23, 25, 50, 72, 97, and 116 each coordinate S-adenosyl-L-methionine.

It belongs to the class I-like SAM-binding methyltransferase superfamily. rRNA adenine N(6)-methyltransferase family. RsmA subfamily.

It is found in the cytoplasm. The enzyme catalyses adenosine(1518)/adenosine(1519) in 16S rRNA + 4 S-adenosyl-L-methionine = N(6)-dimethyladenosine(1518)/N(6)-dimethyladenosine(1519) in 16S rRNA + 4 S-adenosyl-L-homocysteine + 4 H(+). Functionally, specifically dimethylates two adjacent adenosines (A1518 and A1519) in the loop of a conserved hairpin near the 3'-end of 16S rRNA in the 30S particle. May play a critical role in biogenesis of 30S subunits. The chain is Ribosomal RNA small subunit methyltransferase A from Rickettsia prowazekii (strain Madrid E).